Reading from the N-terminus, the 642-residue chain is Threonine--tRNA ligase (642 aa).

A TGS domain is found at 1–61 (MPIITLPDGS…SEDANLEIIT (61 aa)). Residues 243–534 (DHRKIGKALD…ITEEYAGFFP (292 aa)) form a catalytic region. Residues C334, H385, and H511 each coordinate Zn(2+).

This sequence belongs to the class-II aminoacyl-tRNA synthetase family. As to quaternary structure, homodimer. The cofactor is Zn(2+).

It localises to the cytoplasm. The catalysed reaction is tRNA(Thr) + L-threonine + ATP = L-threonyl-tRNA(Thr) + AMP + diphosphate + H(+). In terms of biological role, catalyzes the attachment of threonine to tRNA(Thr) in a two-step reaction: L-threonine is first activated by ATP to form Thr-AMP and then transferred to the acceptor end of tRNA(Thr). Also edits incorrectly charged L-seryl-tRNA(Thr). This Histophilus somni (strain 129Pt) (Haemophilus somnus) protein is Threonine--tRNA ligase.